The sequence spans 118 residues: UPF0102 protein PC1_0307 (118 aa).

The protein belongs to the UPF0102 family.

The chain is UPF0102 protein PC1_0307 from Pectobacterium carotovorum subsp. carotovorum (strain PC1).